A 161-amino-acid polypeptide reads, in one-letter code: M-phase phosphoprotein 6 (161 aa).

Residues Lys-37 and Lys-86 each participate in a glycyl lysine isopeptide (Lys-Gly) (interchain with G-Cter in SUMO2) cross-link. Position 111 is a phosphoserine (Ser-111). The short motif at 117 to 134 is the Nuclear localization signal element; it reads RRYETLVGTIGKKFVKKR. Glycyl lysine isopeptide (Lys-Gly) (interchain with G-Cter in SUMO2) cross-links involve residues Lys-128, Lys-151, and Lys-154.

This sequence belongs to the MPP6 family. Associates with the RNA exosome complex, mediated by EXOSC3. Interacts with ARHGAP18. Interacts with exosome cofactors EXOSC10 and MTREX. Post-translationally, phosphorylated in M (mitotic) phase.

The protein localises to the nucleus. It is found in the nucleolus. It localises to the cytoplasm. RNA-binding protein that associates with the RNA exosome complex. Involved in the 3'-processing of the 7S pre-RNA to the mature 5.8S rRNA and plays a role in recruiting the RNA exosome complex to pre-rRNA; this function may include C1D. This is M-phase phosphoprotein 6 from Mus musculus (Mouse).